Reading from the N-terminus, the 387-residue chain is MTRSVWLKADDEVGDWETRKRRITAGLEAGVDWVLVDRADVARVRELGSVNVAAFSTDDANVIEDAEGTDADPDAYVAGKDGEGDGTVDLPADFSGSADLSALRRGHADTAYVRIRDEEYEPFAQAAAEVADHTIVVGDDWTIIPLENLIARIGEETTLVAGVESAAEAETAFETLDIGADAVLLDSDDPDEIRRTVSVRDAADREHLALSTATITTIEEAGSADRVCVDTGSLLADDEGMLVGSMSRGLFFVHAETAQSPYVAARPFRVNAGAVHAYVRTPDGGTKYLAELGSGDEVQVVDGDGRTRSAVVGRAKIEKRPMFRVEAETDDGDRIETLLQNAETIKVATPNGRTAVTDLSVGDDLHVFLQDGGRHFGEAIDERIIEQ.

This sequence belongs to the archaeal-type DHQ synthase family.

The catalysed reaction is 2-amino-2,3,7-trideoxy-D-lyxo-hept-6-ulosonate + NAD(+) + H2O = 3-dehydroquinate + NH4(+) + NADH + H(+). Functionally, catalyzes the oxidative deamination and cyclization of 2-amino-3,7-dideoxy-D-threo-hept-6-ulosonic acid (ADH) to yield 3-dehydroquinate (DHQ), which is fed into the canonical shikimic pathway of aromatic amino acid biosynthesis. This Halobacterium salinarum (strain ATCC 29341 / DSM 671 / R1) protein is 3-dehydroquinate synthase.